Consider the following 424-residue polypeptide: Serine hydroxymethyltransferase (424 aa).

(6S)-5,6,7,8-tetrahydrofolate-binding positions include Leu-126 and 130 to 132 (GHL). Residue Lys-235 is modified to N6-(pyridoxal phosphate)lysine. Position 359-361 (359-361 (SPF)) interacts with (6S)-5,6,7,8-tetrahydrofolate.

This sequence belongs to the SHMT family. As to quaternary structure, homodimer. Requires pyridoxal 5'-phosphate as cofactor.

The protein resides in the cytoplasm. The enzyme catalyses (6R)-5,10-methylene-5,6,7,8-tetrahydrofolate + glycine + H2O = (6S)-5,6,7,8-tetrahydrofolate + L-serine. Its pathway is one-carbon metabolism; tetrahydrofolate interconversion. The protein operates within amino-acid biosynthesis; glycine biosynthesis; glycine from L-serine: step 1/1. Its function is as follows. Catalyzes the reversible interconversion of serine and glycine with tetrahydrofolate (THF) serving as the one-carbon carrier. This reaction serves as the major source of one-carbon groups required for the biosynthesis of purines, thymidylate, methionine, and other important biomolecules. Also exhibits THF-independent aldolase activity toward beta-hydroxyamino acids, producing glycine and aldehydes, via a retro-aldol mechanism. The chain is Serine hydroxymethyltransferase from Prochlorococcus marinus (strain MIT 9303).